We begin with the raw amino-acid sequence, 307 residues long: N-acetylglucosaminyl-diphospho-decaprenol L-rhamnosyltransferase (307 aa).

Belongs to the glycosyltransferase 2 family. Requires Mn(2+) as cofactor. The cofactor is Mg(2+).

The enzyme catalyses N-acetyl-alpha-D-glucosaminyl-1-diphospho-trans,octa-cis-decaprenol + dTDP-beta-L-rhamnose = alpha-L-rhamnosyl-(1-&gt;3)-N-acetyl-alpha-D-glucosaminyl-diphospho-trans,octa-cis-decaprenol + dTDP + H(+). Its function is as follows. Involved in the biosynthesis of the mycolylarabinogalactan-peptidoglycan (mAGP) complex, an essential component of the mycobacterial cell wall. Catalyzes the transfer of the rhamnosyl moiety from dTDP-rhamnosyl (dTDP-Rha) onto the decaprenyl-pyrophosphoryl-GlcNAc (C50-PP-GlcNAc), yielding rhamnosyl-decaprenyl-pyrophosphoryl-GlcNAc (Rha-C50-PP-GlcNAc). The polypeptide is N-acetylglucosaminyl-diphospho-decaprenol L-rhamnosyltransferase (wbbL) (Mycobacterium tuberculosis (strain CDC 1551 / Oshkosh)).